The chain runs to 35 residues: Tau/kappa-theraphotoxin-Pc1a (35 aa).

3 cysteine pairs are disulfide-bonded: Cys3–Cys17, Cys10–Cys22, and Cys16–Cys29. Position 35 is a phenylalanine amide (Phe35).

This sequence belongs to the neurotoxin 10 (Hwtx-1) family. 62 (Vatx) subfamily. In terms of tissue distribution, expressed by the venom gland.

It localises to the secreted. In terms of biological role, selectively activates mammalian TRPV1, the capsaicin receptor, a non-selective cation channel expressed by sensory neurons of the pain pathway. Is less potent than VaTx2 and VaTx3. Interacts with distinct regions of the channel than capsaicin, since it only acts on the extracellular face of the channel, and capsaicin binds to the cytosolic side. Also activates avian TRPV1, which is insensitive to capsaicin. Significantly inhibits potassium channels Kv2.1/KCNB1. The sequence is that of Tau/kappa-theraphotoxin-Pc1a from Psalmopoeus cambridgei (Trinidad chevron tarantula).